The primary structure comprises 260 residues: Snake venom serine protease 2B (260 aa).

The first 18 residues, 1-18 (MVLIRVLANLLILQLSYA), serve as a signal peptide directing secretion. Positions 19–24 (QKSSEL) are excised as a propeptide. The region spanning 25–251 (VVGGDECNIN…HLDWIQSIIA (227 aa)) is the Peptidase S1 domain. Intrachain disulfides connect Cys-31/Cys-165, Cys-52/Cys-68, Cys-102/Cys-258, Cys-144/Cys-212, Cys-176/Cys-191, and Cys-202/Cys-227. His-67 (charge relay system) is an active-site residue. 2 N-linked (GlcNAc...) asparagine glycosylation sites follow: Asn-101 and Asn-105. Asp-112 acts as the Charge relay system in catalysis. N-linked (GlcNAc...) asparagine glycosylation is found at Asn-123 and Asn-156. The active-site Charge relay system is Ser-206.

Belongs to the peptidase S1 family. Snake venom subfamily. Monomer. As to expression, expressed by the venom gland.

It localises to the secreted. Snake venom serine protease that may act in the hemostasis system of the prey. This chain is Snake venom serine protease 2B (TLG2B), found in Craspedocephalus gramineus (Bamboo pit viper).